The chain runs to 429 residues: Autophagy-related protein 18 (429 aa).

7 WD repeats span residues 1 to 36 (MAMN…KSYE), 69 to 114 (KRQS…LLYT), 139 to 182 (PLPQ…AINV), 185 to 225 (AHRS…KLYQ), 230 to 269 (SMPS…SSPD), 309 to 355 (KHNG…AWFK), and 367 to 407 (VNNG…GGEG). Positions 226–230 (FRRGS) match the L/FRRG motif motif. A compositionally biased stretch (low complexity) spans 262-275 (SHPTSSPDASPSSP). A disordered region spans residues 262–308 (SHPTSSPDASPSSPVGRDRSLSQSSSGYSPDRGDLTGDVGSSDFPAR).

This sequence belongs to the WD repeat PROPPIN family. In terms of assembly, component of the PI(3,5)P2 regulatory complex.

The protein resides in the preautophagosomal structure membrane. Its subcellular location is the vacuole membrane. It localises to the endosome membrane. Its function is as follows. The PI(3,5)P2 regulatory complex regulates both the synthesis and turnover of phosphatidylinositol 3,5-bisphosphate (PtdIns(3,5)P2). Necessary for proper vacuole morphology. Plays an important role in osmotically-induced vacuole fragmentation. Required for cytoplasm to vacuole transport (Cvt) vesicle formation, pexophagy and starvation-induced autophagy. Involved in correct atg9 trafficking to the pre-autophagosomal structure. Might also be involved in premeiotic DNA replication. This Neosartorya fischeri (strain ATCC 1020 / DSM 3700 / CBS 544.65 / FGSC A1164 / JCM 1740 / NRRL 181 / WB 181) (Aspergillus fischerianus) protein is Autophagy-related protein 18 (atg18).